We begin with the raw amino-acid sequence, 451 residues long: Chromosomal replication initiator protein DnaA (451 aa).

Residues 1-82 (MENSLWKQCL…RLELQIGSSA (82 aa)) form a domain I, interacts with DnaA modulators region. A domain II region spans residues 82 to 114 (AVVAPPRRRQVSVTTPSPSAAADQTPATRSAAS). The interval 85-112 (APPRRRQVSVTTPSPSAAADQTPATRSA) is disordered. The domain III, AAA+ region stretch occupies residues 115–331 (NLNSNFTFDT…GALRRVVANA (217 aa)). 4 residues coordinate ATP: Gly-159, Gly-161, Lys-162, and Thr-163. The segment at 332–451 (QFTGQEITVE…YSNLLRTLST (120 aa)) is domain IV, binds dsDNA.

Belongs to the DnaA family. In terms of assembly, oligomerizes as a right-handed, spiral filament on DNA at oriC.

The protein resides in the cytoplasm. Plays an essential role in the initiation and regulation of chromosomal replication. ATP-DnaA binds to the origin of replication (oriC) to initiate formation of the DNA replication initiation complex once per cell cycle. Binds the DnaA box (a 9 base pair repeat at the origin) and separates the double-stranded (ds)DNA. Forms a right-handed helical filament on oriC DNA; dsDNA binds to the exterior of the filament while single-stranded (ss)DNA is stabiized in the filament's interior. The ATP-DnaA-oriC complex binds and stabilizes one strand of the AT-rich DNA unwinding element (DUE), permitting loading of DNA polymerase. After initiation quickly degrades to an ADP-DnaA complex that is not apt for DNA replication. Binds acidic phospholipids. This is Chromosomal replication initiator protein DnaA from Alkalilimnicola ehrlichii (strain ATCC BAA-1101 / DSM 17681 / MLHE-1).